A 486-amino-acid polypeptide reads, in one-letter code: Homoserine O-acetyltransferase (486 aa).

The 371-residue stretch at 66–436 folds into the AB hydrolase-1 domain; sequence NVLVICHALT…PEGHDAFLLE (371 aa). Ser-162 is an active-site residue. Residue Ser-162 is the Nucleophile of the active site. Residues 248-274 are disordered; it reads KFSRRSPSIAQQQKAQKAEVRKPSTVS. Residues 250-262 are compositionally biased toward polar residues; that stretch reads SRRSPSIAQQQKA. Active-site residues include Asp-401 and His-430.

This sequence belongs to the AB hydrolase superfamily. MetX family.

It catalyses the reaction L-homoserine + acetyl-CoA = O-acetyl-L-homoserine + CoA. It functions in the pathway amino-acid biosynthesis; L-methionine biosynthesis via de novo pathway; O-acetyl-L-homoserine from L-homoserine: step 1/1. Its function is as follows. Commits homoserine to the methionine biosynthesis pathway by catalyzing its O-acetylation. The sequence is that of Homoserine O-acetyltransferase (MET2) from Saccharomyces pastorianus (Lager yeast).